The following is a 351-amino-acid chain: Phospho-N-acetylmuramoyl-pentapeptide-transferase (351 aa).

Helical transmembrane passes span 17-37, 62-82, 85-105, 124-144, 161-181, 190-210, 230-250, 254-274, 279-299, and 328-348; these read MAYA…HIIL, GIPT…LVFW, ILNV…FLGF, FKIY…YYFG, IDLG…ASNS, GLAI…AYLT, LVIF…FNAY, IMMG…AALI, ILFS…IIQV, and QVVI…LSTI.

This sequence belongs to the glycosyltransferase 4 family. MraY subfamily. The cofactor is Mg(2+).

It localises to the cell inner membrane. The enzyme catalyses UDP-N-acetyl-alpha-D-muramoyl-L-alanyl-gamma-D-glutamyl-meso-2,6-diaminopimeloyl-D-alanyl-D-alanine + di-trans,octa-cis-undecaprenyl phosphate = di-trans,octa-cis-undecaprenyl diphospho-N-acetyl-alpha-D-muramoyl-L-alanyl-D-glutamyl-meso-2,6-diaminopimeloyl-D-alanyl-D-alanine + UMP. Its pathway is cell wall biogenesis; peptidoglycan biosynthesis. In terms of biological role, catalyzes the initial step of the lipid cycle reactions in the biosynthesis of the cell wall peptidoglycan: transfers peptidoglycan precursor phospho-MurNAc-pentapeptide from UDP-MurNAc-pentapeptide onto the lipid carrier undecaprenyl phosphate, yielding undecaprenyl-pyrophosphoryl-MurNAc-pentapeptide, known as lipid I. In Borrelia garinii subsp. bavariensis (strain ATCC BAA-2496 / DSM 23469 / PBi) (Borreliella bavariensis), this protein is Phospho-N-acetylmuramoyl-pentapeptide-transferase.